The sequence spans 253 residues: Phosphoadenosine 5'-phosphosulfate reductase (253 aa).

Catalysis depends on Cys239, which acts as the Nucleophile; cysteine thiosulfonate intermediate.

This sequence belongs to the PAPS reductase family. CysH subfamily.

It localises to the cytoplasm. The enzyme catalyses [thioredoxin]-disulfide + sulfite + adenosine 3',5'-bisphosphate + 2 H(+) = [thioredoxin]-dithiol + 3'-phosphoadenylyl sulfate. The protein operates within sulfur metabolism; hydrogen sulfide biosynthesis; sulfite from sulfate: step 3/3. Catalyzes the formation of sulfite from phosphoadenosine 5'-phosphosulfate (PAPS) using thioredoxin as an electron donor. In Aliivibrio salmonicida (strain LFI1238) (Vibrio salmonicida (strain LFI1238)), this protein is Phosphoadenosine 5'-phosphosulfate reductase.